Consider the following 248-residue polypeptide: CKLF-like MARVEL transmembrane domain-containing protein 2 (248 aa).

A disordered region spans residues Met-1–Gly-63. Residues Glu-12–Ala-22 show a composition bias toward pro residues. Basic and acidic residues predominate over residues Lys-23–Gly-63. The MARVEL domain maps to Phe-82 to Arg-204. The next 3 membrane-spanning stretches (helical) occupy residues Leu-116 to Ile-136, Ile-147 to Ala-167, and Tyr-178 to Leu-198. A disordered region spans residues Ala-208 to Lys-248. Over residues Pro-231–Lys-248 the composition is skewed to pro residues.

It belongs to the chemokine-like factor family. Highly expressed in testis.

It localises to the membrane. The sequence is that of CKLF-like MARVEL transmembrane domain-containing protein 2 (CMTM2) from Homo sapiens (Human).